A 446-amino-acid chain; its full sequence is Maltoporin (446 aa).

Positions 1–25 are cleaved as a signal peptide; sequence MMITLRKLPLAVAVAAGVMSAQAMA.

This sequence belongs to the porin LamB (TC 1.B.3) family. In terms of assembly, homotrimer formed of three 18-stranded antiparallel beta-barrels, containing three independent channels.

The protein resides in the cell outer membrane. It carries out the reaction beta-maltose(in) = beta-maltose(out). In terms of biological role, involved in the transport of maltose and maltodextrins. The polypeptide is Maltoporin (Escherichia coli O157:H7 (strain EC4115 / EHEC)).